The following is a 443-amino-acid chain: Tol-Pal system protein TolB (443 aa).

The N-terminal stretch at 1–33 (MKIGIINTKIRTVFSAFACMIAASLVCTMPARA) is a signal peptide.

This sequence belongs to the TolB family. The Tol-Pal system is composed of five core proteins: the inner membrane proteins TolA, TolQ and TolR, the periplasmic protein TolB and the outer membrane protein Pal. They form a network linking the inner and outer membranes and the peptidoglycan layer.

The protein localises to the periplasm. Functionally, part of the Tol-Pal system, which plays a role in outer membrane invagination during cell division and is important for maintaining outer membrane integrity. This chain is Tol-Pal system protein TolB, found in Brucella canis (strain ATCC 23365 / NCTC 10854 / RM-666).